Reading from the N-terminus, the 256-residue chain is ATP synthase subunit a (256 aa).

The next 6 helical transmembrane spans lie at 33-53, 92-112, 122-142, 148-168, 191-211, and 235-255; these read ITTF…LTLL, YFPL…IGMI, MVFI…IGLY, FFAL…LVLI, GHLL…VSIV, and MIQS…GLYL.

The protein belongs to the ATPase A chain family. In terms of assembly, F-type ATPases have 2 components, CF(1) - the catalytic core - and CF(0) - the membrane proton channel. CF(1) has five subunits: alpha(3), beta(3), gamma(1), delta(1), epsilon(1). CF(0) has three main subunits: a, b and c.

It localises to the mitochondrion inner membrane. Functionally, mitochondrial membrane ATP synthase (F(1)F(0) ATP synthase or Complex V) produces ATP from ADP in the presence of a proton gradient across the membrane which is generated by electron transport complexes of the respiratory chain. F-type ATPases consist of two structural domains, F(1) - containing the extramembraneous catalytic core and F(0) - containing the membrane proton channel, linked together by a central stalk and a peripheral stalk. During catalysis, ATP synthesis in the catalytic domain of F(1) is coupled via a rotary mechanism of the central stalk subunits to proton translocation. Key component of the proton channel; it may play a direct role in the translocation of protons across the membrane. The polypeptide is ATP synthase subunit a (ATP6) (Wickerhamomyces canadensis (Yeast)).